The following is a 309-amino-acid chain: Sulfate adenylyltransferase subunit 2 (309 aa).

The protein belongs to the PAPS reductase family. CysD subfamily. In terms of assembly, heterodimer composed of CysD, the smaller subunit, and CysN.

It carries out the reaction sulfate + ATP + H(+) = adenosine 5'-phosphosulfate + diphosphate. It functions in the pathway sulfur metabolism; hydrogen sulfide biosynthesis; sulfite from sulfate: step 1/3. In terms of biological role, with CysN forms the ATP sulfurylase (ATPS) that catalyzes the adenylation of sulfate producing adenosine 5'-phosphosulfate (APS) and diphosphate, the first enzymatic step in sulfur assimilation pathway. APS synthesis involves the formation of a high-energy phosphoric-sulfuric acid anhydride bond driven by GTP hydrolysis by CysN coupled to ATP hydrolysis by CysD. The polypeptide is Sulfate adenylyltransferase subunit 2 (Methylorubrum extorquens (strain CM4 / NCIMB 13688) (Methylobacterium extorquens)).